The primary structure comprises 289 residues: ATP synthase gamma chain (289 aa).

Belongs to the ATPase gamma chain family. In terms of assembly, F-type ATPases have 2 components, CF(1) - the catalytic core - and CF(0) - the membrane proton channel. CF(1) has five subunits: alpha(3), beta(3), gamma(1), delta(1), epsilon(1). CF(0) has three main subunits: a, b and c.

It localises to the cell inner membrane. Its function is as follows. Produces ATP from ADP in the presence of a proton gradient across the membrane. The gamma chain is believed to be important in regulating ATPase activity and the flow of protons through the CF(0) complex. This chain is ATP synthase gamma chain, found in Dichelobacter nodosus (strain VCS1703A).